The following is a 515-amino-acid chain: Germ cell-less protein-like 1 (515 aa).

A disordered region spans residues 1–35; the sequence is MGSLSSRVLRQPRPALAQQAQGARAGGSARRPDTG. Over residues 11–29 the composition is skewed to low complexity; the sequence is QPRPALAQQAQGARAGGSA. The short motif at 49-55 is the Nuclear localization signal element; the sequence is SHKRKRS. Residues 65 to 85 form a disordered region; the sequence is DSETDEDEEEGDEQQRLLNTP. A Phosphoserine modification is found at Ser66. Positions 67 to 76 are enriched in acidic residues; the sequence is ETDEDEEEGD. The residue at position 68 (Thr68) is a Phosphothreonine. The short motif at 85–91 is the Nuclear localization signal element; that stretch reads PRRKKLK. Residues 108 to 178 enclose the BTB domain; that stretch reads SDIKICALGE…LYRDDVLIKP (71 aa).

As to quaternary structure, interacts with TMPO-beta, TSG101 and TFDP2. Interacts with EMD.

Its subcellular location is the nucleus matrix. Functionally, possible function in spermatogenesis. Enhances the degradation of MDM2 and increases the amount of p53 probably by modulating the nucleocytoplasmic transport. The polypeptide is Germ cell-less protein-like 1 (GMCL1) (Homo sapiens (Human)).